The chain runs to 148 residues: 3-dehydroquinate dehydratase (148 aa).

The active-site Proton acceptor is the Y26. Substrate is bound by residues N77, H83, and D90. The Proton donor role is filled by H103. Substrate contacts are provided by residues 104–105 (LS) and R114.

The protein belongs to the type-II 3-dehydroquinase family. As to quaternary structure, homododecamer.

The enzyme catalyses 3-dehydroquinate = 3-dehydroshikimate + H2O. The protein operates within metabolic intermediate biosynthesis; chorismate biosynthesis; chorismate from D-erythrose 4-phosphate and phosphoenolpyruvate: step 3/7. Functionally, catalyzes a trans-dehydration via an enolate intermediate. The sequence is that of 3-dehydroquinate dehydratase from Chlorobaculum tepidum (strain ATCC 49652 / DSM 12025 / NBRC 103806 / TLS) (Chlorobium tepidum).